A 217-amino-acid chain; its full sequence is Probable GTP-binding protein EngB (217 aa).

An EngB-type G domain is found at 37 to 214 (AGVEVAFAGR…RAAMARLIGE (178 aa)). GTP-binding positions include 45–52 (GRSNVGKS), 72–76 (GRTQE), 92–95 (DMPG), 159–162 (TKAD), and 193–195 (TSS). The Mg(2+) site is built by Ser52 and Thr74.

The protein belongs to the TRAFAC class TrmE-Era-EngA-EngB-Septin-like GTPase superfamily. EngB GTPase family. Requires Mg(2+) as cofactor.

In terms of biological role, necessary for normal cell division and for the maintenance of normal septation. This Nitrobacter hamburgensis (strain DSM 10229 / NCIMB 13809 / X14) protein is Probable GTP-binding protein EngB.